Consider the following 123-residue polypeptide: Polyadenylate-binding protein-interacting protein 2B (123 aa).

Methionine 1 is modified (N-acetylmethionine). Residues 1–13 (MNGSNMANTSPSV) show a composition bias toward polar residues. Disordered regions lie at residues 1 to 30 (MNGS…KENP) and 91 to 123 (NGLS…GEKY). 2 stretches are compositionally biased toward basic and acidic residues: residues 14 to 30 (KSKE…KENP) and 113 to 123 (DAKEFIPGEKY).

The protein belongs to the PAIP2 family. In terms of assembly, interacts (via central acidic portion and C-terminus) with PABPC1 (via the second and third RRM domains and the C-terminus). Ubiquitinated in vitro. Expressed in brain, cervix, heart, liver, ovary, kidney, prostate and testis.

Functionally, inhibits translation of capped and polyadenylated mRNAs by displacing PABPC1 from the poly(A) tail. The sequence is that of Polyadenylate-binding protein-interacting protein 2B (PAIP2B) from Homo sapiens (Human).